The primary structure comprises 295 residues: Ribosomal protein L11 methyltransferase (295 aa).

The S-adenosyl-L-methionine site is built by Thr145, Gly166, Asp188, and Asn230.

It belongs to the methyltransferase superfamily. PrmA family.

Its subcellular location is the cytoplasm. It catalyses the reaction L-lysyl-[protein] + 3 S-adenosyl-L-methionine = N(6),N(6),N(6)-trimethyl-L-lysyl-[protein] + 3 S-adenosyl-L-homocysteine + 3 H(+). In terms of biological role, methylates ribosomal protein L11. This chain is Ribosomal protein L11 methyltransferase, found in Pectobacterium atrosepticum (strain SCRI 1043 / ATCC BAA-672) (Erwinia carotovora subsp. atroseptica).